The chain runs to 710 residues: Pentatricopeptide repeat-containing protein At3g14330 (710 aa).

PPR repeat units lie at residues 166-196 (NPKL…VTDS), 200-234 (TEKV…FIEP), 235-269 (GNFS…KEKV), 270-304 (DQVV…NVVT), 305-331 (WNSL…MQEE), 336-370 (SWAT…KEKP), 371-401 (DVPL…MLTK), 402-436 (DLAS…GVAP), 437-467 (DGIT…MKTE), and 473-503 (ALEH…MPFK). The segment at 508–583 (IWGSLLNSCR…EAGCSWVQVK (76 aa)) is type E motif. A type E(+) motif region spans residues 584–615 (DKIQIFVAGGGYEFRNSDEYKKVWTELQEAIE). The segment at 616–710 (KSGYSPNTSV…DGICSCKDYW (95 aa)) is type DYW motif.

This sequence belongs to the PPR family. PCMP-H subfamily.

The polypeptide is Pentatricopeptide repeat-containing protein At3g14330 (PCMP-H57) (Arabidopsis thaliana (Mouse-ear cress)).